The sequence spans 281 residues: D-arabinitol 2-dehydrogenase [ribulose-forming] (281 aa).

NADP(+)-binding residues include L31 and N52. The Proton donor role is filled by S169. Residues Y184, K188, I217, and T219 each contribute to the NADP(+) site. Catalysis depends on Y184, which acts as the Proton acceptor. Catalysis depends on K188, which acts as the Lowers pKa of active site Tyr.

Belongs to the short-chain dehydrogenases/reductases (SDR) family.

It carries out the reaction D-arabinitol + NAD(+) = D-ribulose + NADH + H(+). The protein operates within carbohydrate metabolism; D-arabinitol metabolism. This is D-arabinitol 2-dehydrogenase [ribulose-forming] (ARD1) from Candida albicans (strain WO-1) (Yeast).